Consider the following 185-residue polypeptide: Calcium and integrin-binding family member 4 (185 aa).

3 EF-hand domains span residues 62 to 95 (RVNPFRDRICRVFSHDNVFSFEDVLGMASVFSEQ), 97 to 132 (CPSLKIEYAFRIYDFNENGFIDEEDLEEIVLRLLKS), and 138 to 174 (DLLMDVMHHVLSESDLDNDSMLSFSEFEHAMAKSPDF). Positions 110, 112, 114, and 121 each coordinate Ca(2+).

As to quaternary structure, interacts with ITGA2B (via C-terminus cytoplasmic tail region); the interaction is stabilized/increased in a calcium- and magnesium-dependent manner. In terms of tissue distribution, expressed weakly in megakaryocytes and endothelial cells.

This chain is Calcium and integrin-binding family member 4 (Cib4), found in Mus musculus (Mouse).